Here is a 794-residue protein sequence, read N- to C-terminus: Phenylalanine--tRNA ligase beta subunit (794 aa).

The tRNA-binding domain maps to 40–158; it reads NSLNSELILG…LKKYIGSDVK (119 aa). One can recognise a B5 domain in the interval 402–477; it reads KNKQSLEIKL…RLYSYDKIDE (76 aa). The Mg(2+) site is built by D455, D461, E464, and E465. Positions 702–794 constitute an FDX-ACB domain; the sequence is SKFQSSSRDL…NIKQMKVVIR (93 aa).

This sequence belongs to the phenylalanyl-tRNA synthetase beta subunit family. Type 1 subfamily. Tetramer of two alpha and two beta subunits. The cofactor is Mg(2+).

It is found in the cytoplasm. The enzyme catalyses tRNA(Phe) + L-phenylalanine + ATP = L-phenylalanyl-tRNA(Phe) + AMP + diphosphate + H(+). This is Phenylalanine--tRNA ligase beta subunit from Mycoplasma mycoides subsp. mycoides SC (strain CCUG 32753 / NCTC 10114 / PG1).